A 288-amino-acid polypeptide reads, in one-letter code: 2-dehydro-3-deoxyphosphooctonate aldolase (288 aa).

Belongs to the KdsA family.

The protein localises to the cytoplasm. The enzyme catalyses D-arabinose 5-phosphate + phosphoenolpyruvate + H2O = 3-deoxy-alpha-D-manno-2-octulosonate-8-phosphate + phosphate. The protein operates within carbohydrate biosynthesis; 3-deoxy-D-manno-octulosonate biosynthesis; 3-deoxy-D-manno-octulosonate from D-ribulose 5-phosphate: step 2/3. Its pathway is bacterial outer membrane biogenesis; lipopolysaccharide biosynthesis. In Syntrophobacter fumaroxidans (strain DSM 10017 / MPOB), this protein is 2-dehydro-3-deoxyphosphooctonate aldolase.